The chain runs to 155 residues: Protein-export protein SecB (155 aa).

This sequence belongs to the SecB family. In terms of assembly, homotetramer, a dimer of dimers. One homotetramer interacts with 1 SecA dimer.

It is found in the cytoplasm. One of the proteins required for the normal export of preproteins out of the cell cytoplasm. It is a molecular chaperone that binds to a subset of precursor proteins, maintaining them in a translocation-competent state. It also specifically binds to its receptor SecA. This chain is Protein-export protein SecB, found in Vibrio vulnificus (strain CMCP6).